A 610-amino-acid polypeptide reads, in one-letter code: POU domain, class 6, transcription factor 1 (610 aa).

The tract at residues 55–87 is disordered; the sequence is SSAGAAESGGDEEGSGQSLEATEEAQLDGPVTT. A POU-specific domain is found at 448 to 522; that stretch reads EEAINLEEIR…VLERWLAEAE (75 aa). The homeobox DNA-binding region spans 543–602; that stretch reads KRKRRTSFTPQAIEVLNTYFEKNSLPTGQEITEIAKELNYDREVVRVWFCNRRQTLKNTS.

It belongs to the POU transcription factor family. Class-6 subfamily. As to expression, ubiquitously expressed during embryogenesis.

The protein localises to the nucleus. Its function is as follows. Transcription factor that binds with high affinity to the motif 5'-TAATGARAT-3'. The protein is POU domain, class 6, transcription factor 1 (pou6f1) of Danio rerio (Zebrafish).